Here is a 116-residue protein sequence, read N- to C-terminus: Methionine-R-sulfoxide reductase B1 (116 aa).

A MsrB domain is found at 1–106; it reads MSFCSFFGGE…FSSSLKFVPK (106 aa). Zn(2+) contacts are provided by cysteine 23, cysteine 26, cysteine 71, and cysteine 74. Catalysis depends on selenocysteine 95, which acts as the Nucleophile. Position 95 (selenocysteine 95) is a non-standard amino acid, selenocysteine.

It belongs to the MsrB Met sulfoxide reductase family. The cofactor is Zn(2+). Post-translationally, truncated MSRB1/SEPX1 proteins produced by failed UGA/Sec decoding are ubiquitinated by the CRL2(FEM1C) E3 ubiquitin-protein ligase complex.

It localises to the cytoplasm. Its subcellular location is the nucleus. It is found in the cytoskeleton. It catalyses the reaction L-methionyl-[protein] + [thioredoxin]-disulfide + H2O = L-methionyl-(R)-S-oxide-[protein] + [thioredoxin]-dithiol. It carries out the reaction [thioredoxin]-disulfide + L-methionine + H2O = L-methionine (R)-S-oxide + [thioredoxin]-dithiol. Functionally, methionine-sulfoxide reductase that specifically reduces methionine (R)-sulfoxide back to methionine. While in many cases, methionine oxidation is the result of random oxidation following oxidative stress, methionine oxidation is also a post-translational modification that takes place on specific residue. Acts as a regulator of actin assembly by reducing methionine (R)-sulfoxide mediated by MICALs (MICAL1, MICAL2 or MICAL3) on actin, thereby promoting filament repolymerization. Plays a role in innate immunity by reducing oxidized actin, leading to actin repolymerization in macrophages. The protein is Methionine-R-sulfoxide reductase B1 (MSRB1) of Pongo abelii (Sumatran orangutan).